The chain runs to 219 residues: Flagellar L-ring protein (219 aa).

The N-terminal stretch at 1 to 14 is a signal peptide; sequence MKRLVLISLVLAAG. The N-palmitoyl cysteine moiety is linked to residue C15. C15 carries the S-diacylglycerol cysteine lipid modification.

The protein belongs to the FlgH family. As to quaternary structure, the basal body constitutes a major portion of the flagellar organelle and consists of four rings (L,P,S, and M) mounted on a central rod.

The protein localises to the cell outer membrane. It is found in the bacterial flagellum basal body. In terms of biological role, assembles around the rod to form the L-ring and probably protects the motor/basal body from shearing forces during rotation. This is Flagellar L-ring protein from Dechloromonas aromatica (strain RCB).